The primary structure comprises 119 residues: Beta-2-microglobulin (119 aa).

The first 20 residues, 1-20 (MARFVVVALLALLSLSGLEA), serve as a signal peptide directing secretion. The region spanning 25–114 (PKIQVYSRHP…VTFPTPKTVK (90 aa)) is the Ig-like C1-type domain. An intrachain disulfide couples C45 to C100.

The protein belongs to the beta-2-microglobulin family. Heterodimer of an alpha chain and a beta chain. Beta-2-microglobulin is the beta-chain of major histocompatibility complex class I molecules.

Its subcellular location is the secreted. Its function is as follows. Component of the class I major histocompatibility complex (MHC). Involved in the presentation of peptide antigens to the immune system. This chain is Beta-2-microglobulin (B2M), found in Alouatta seniculus (Red howler monkey).